A 447-amino-acid polypeptide reads, in one-letter code: Na(+)-translocating NADH-quinone reductase subunit A (447 aa).

It belongs to the NqrA family. In terms of assembly, composed of six subunits; NqrA, NqrB, NqrC, NqrD, NqrE and NqrF.

It catalyses the reaction a ubiquinone + n Na(+)(in) + NADH + H(+) = a ubiquinol + n Na(+)(out) + NAD(+). Functionally, NQR complex catalyzes the reduction of ubiquinone-1 to ubiquinol by two successive reactions, coupled with the transport of Na(+) ions from the cytoplasm to the periplasm. NqrA to NqrE are probably involved in the second step, the conversion of ubisemiquinone to ubiquinol. The sequence is that of Na(+)-translocating NADH-quinone reductase subunit A from Yersinia pestis bv. Antiqua (strain Angola).